The primary structure comprises 355 residues: Electron transfer flavoprotein subunit alpha, mitochondrial (355 aa).

Position 295 to 323 (295 to 323 (LYIAVGISGAIQHLAGMKDSKVIVAINKD)) interacts with FAD.

This sequence belongs to the ETF alpha-subunit/FixB family. As to quaternary structure, heterodimer of an alpha and a beta subunit. FAD is required as a cofactor.

The protein resides in the mitochondrion matrix. The electron transfer flavoprotein serves as a specific electron acceptor for several dehydrogenases, including five acyl-CoA dehydrogenases, glutaryl-CoA and sarcosine dehydrogenase. It transfers the electrons to the main mitochondrial respiratory chain via ETF-ubiquinone oxidoreductase (ETF dehydrogenase). The polypeptide is Electron transfer flavoprotein subunit alpha, mitochondrial (etfa) (Dictyostelium discoideum (Social amoeba)).